The sequence spans 228 residues: Octanoyltransferase (228 aa).

Residues 32 to 214 (DVVPDTVLLV…HLRRLFERDW (183 aa)) enclose the BPL/LPL catalytic domain. Substrate contacts are provided by residues 77–84 (RGGDVTYH), 144–146 (SVG), and 157–159 (GIA). Cys-175 (acyl-thioester intermediate) is an active-site residue.

This sequence belongs to the LipB family.

The protein resides in the cytoplasm. The enzyme catalyses octanoyl-[ACP] + L-lysyl-[protein] = N(6)-octanoyl-L-lysyl-[protein] + holo-[ACP] + H(+). The protein operates within protein modification; protein lipoylation via endogenous pathway; protein N(6)-(lipoyl)lysine from octanoyl-[acyl-carrier-protein]: step 1/2. In terms of biological role, catalyzes the transfer of endogenously produced octanoic acid from octanoyl-acyl-carrier-protein onto the lipoyl domains of lipoate-dependent enzymes. Lipoyl-ACP can also act as a substrate although octanoyl-ACP is likely to be the physiological substrate. The sequence is that of Octanoyltransferase from Syntrophobacter fumaroxidans (strain DSM 10017 / MPOB).